Consider the following 230-residue polypeptide: Cytidylate kinase (230 aa).

12–20 (GPSGAGKGT) is an ATP binding site.

It belongs to the cytidylate kinase family. Type 1 subfamily.

The protein localises to the cytoplasm. The catalysed reaction is CMP + ATP = CDP + ADP. It carries out the reaction dCMP + ATP = dCDP + ADP. In Aeromonas hydrophila subsp. hydrophila (strain ATCC 7966 / DSM 30187 / BCRC 13018 / CCUG 14551 / JCM 1027 / KCTC 2358 / NCIMB 9240 / NCTC 8049), this protein is Cytidylate kinase.